The sequence spans 69 residues: Sec-independent protein translocase protein TatA (69 aa).

The helical transmembrane segment at methionine 1–glycine 21 threads the bilayer. The segment at glutamate 48 to serine 69 is disordered.

It belongs to the TatA/E family. In terms of assembly, forms a complex with TatC.

It is found in the cell inner membrane. In terms of biological role, part of the twin-arginine translocation (Tat) system that transports large folded proteins containing a characteristic twin-arginine motif in their signal peptide across membranes. TatA could form the protein-conducting channel of the Tat system. The chain is Sec-independent protein translocase protein TatA from Chlorobium phaeobacteroides (strain BS1).